We begin with the raw amino-acid sequence, 255 residues long: EEF1A lysine methyltransferase 4 (255 aa).

The S-adenosyl-L-methionine site is built by W26 and Y30. Y39 carries the post-translational modification Phosphotyrosine. Residues W41, G66, 88–89 (DY), 113–114 (DV), and K130 each bind S-adenosyl-L-methionine. Residues 129–134 (EKGTLD) carry the Required for methyltransferase activity motif.

Belongs to the methyltransferase superfamily.

The catalysed reaction is L-lysyl-[protein] + S-adenosyl-L-methionine = N(6)-methyl-L-lysyl-[protein] + S-adenosyl-L-homocysteine + H(+). The enzyme catalyses N(6)-methyl-L-lysyl-[protein] + S-adenosyl-L-methionine = N(6),N(6)-dimethyl-L-lysyl-[protein] + S-adenosyl-L-homocysteine + H(+). It carries out the reaction N(6),N(6)-dimethyl-L-lysyl-[protein] + S-adenosyl-L-methionine = N(6),N(6),N(6)-trimethyl-L-lysyl-[protein] + S-adenosyl-L-homocysteine + H(+). Protein-lysine methyltransferase that efficiently catalyzes three successive methylations on 'Lys-36' in eukaryotic translation elongation factor 1 alpha (EEF1A1 or EEF1A2). This Mus musculus (Mouse) protein is EEF1A lysine methyltransferase 4.